The following is a 123-amino-acid chain: Small ribosomal subunit protein uS12 (123 aa).

Asp89 bears the 3-methylthioaspartic acid mark.

The protein belongs to the universal ribosomal protein uS12 family. In terms of assembly, part of the 30S ribosomal subunit. Contacts proteins S8 and S17. May interact with IF1 in the 30S initiation complex.

In terms of biological role, with S4 and S5 plays an important role in translational accuracy. Functionally, interacts with and stabilizes bases of the 16S rRNA that are involved in tRNA selection in the A site and with the mRNA backbone. Located at the interface of the 30S and 50S subunits, it traverses the body of the 30S subunit contacting proteins on the other side and probably holding the rRNA structure together. The combined cluster of proteins S8, S12 and S17 appears to hold together the shoulder and platform of the 30S subunit. The chain is Small ribosomal subunit protein uS12 from Syntrophobacter fumaroxidans (strain DSM 10017 / MPOB).